A 440-amino-acid polypeptide reads, in one-letter code: Cobyrinate a,c-diamide synthase (440 aa).

The GATase cobBQ-type domain occupies 247-428 (RIAIAYDAAF…MHLYFPSNPR (182 aa)). Cys-329 acts as the Nucleophile in catalysis.

The protein belongs to the CobB/CbiA family. It depends on Mg(2+) as a cofactor.

It catalyses the reaction cob(II)yrinate + 2 L-glutamine + 2 ATP + 2 H2O = cob(II)yrinate a,c diamide + 2 L-glutamate + 2 ADP + 2 phosphate + 2 H(+). It participates in cofactor biosynthesis; adenosylcobalamin biosynthesis; cob(II)yrinate a,c-diamide from sirohydrochlorin (anaerobic route): step 10/10. Catalyzes the ATP-dependent amidation of the two carboxylate groups at positions a and c of cobyrinate, using either L-glutamine or ammonia as the nitrogen source. The protein is Cobyrinate a,c-diamide synthase of Picrophilus torridus (strain ATCC 700027 / DSM 9790 / JCM 10055 / NBRC 100828 / KAW 2/3).